The chain runs to 337 residues: RNA 3'-terminal phosphate cyclase (337 aa).

ATP-binding positions include glutamine 101 and 282-285 (HMSD). Histidine 306 functions as the Tele-AMP-histidine intermediate in the catalytic mechanism.

Belongs to the RNA 3'-terminal cyclase family. Type 1 subfamily.

Its subcellular location is the cytoplasm. The catalysed reaction is a 3'-end 3'-phospho-ribonucleotide-RNA + ATP = a 3'-end 2',3'-cyclophospho-ribonucleotide-RNA + AMP + diphosphate. Its function is as follows. Catalyzes the conversion of 3'-phosphate to a 2',3'-cyclic phosphodiester at the end of RNA. The mechanism of action of the enzyme occurs in 3 steps: (A) adenylation of the enzyme by ATP; (B) transfer of adenylate to an RNA-N3'P to produce RNA-N3'PP5'A; (C) and attack of the adjacent 2'-hydroxyl on the 3'-phosphorus in the diester linkage to produce the cyclic end product. The biological role of this enzyme is unknown but it is likely to function in some aspects of cellular RNA processing. In Saccharolobus solfataricus (strain ATCC 35092 / DSM 1617 / JCM 11322 / P2) (Sulfolobus solfataricus), this protein is RNA 3'-terminal phosphate cyclase (rtcA).